The chain runs to 204 residues: Holliday junction branch migration complex subunit RuvA (204 aa).

Residues 1–64 are domain I; it reads MIAQLKGSLA…EDAFLLYGFH (64 aa). The tract at residues 65–143 is domain II; sequence SESQRKVFNL…ALPMAAPTTA (79 aa). The tract at residues 144 to 154 is flexible linker; sequence IGAATMAANPA. A domain III region spans residues 154 to 204; it reads AGLREEVASALLNLGYKPPQVDAALAKLFSAGEITDISVALKGALKLLAPA.

The protein belongs to the RuvA family. Homotetramer. Forms an RuvA(8)-RuvB(12)-Holliday junction (HJ) complex. HJ DNA is sandwiched between 2 RuvA tetramers; dsDNA enters through RuvA and exits via RuvB. An RuvB hexamer assembles on each DNA strand where it exits the tetramer. Each RuvB hexamer is contacted by two RuvA subunits (via domain III) on 2 adjacent RuvB subunits; this complex drives branch migration. In the full resolvosome a probable DNA-RuvA(4)-RuvB(12)-RuvC(2) complex forms which resolves the HJ.

It localises to the cytoplasm. The RuvA-RuvB-RuvC complex processes Holliday junction (HJ) DNA during genetic recombination and DNA repair, while the RuvA-RuvB complex plays an important role in the rescue of blocked DNA replication forks via replication fork reversal (RFR). RuvA specifically binds to HJ cruciform DNA, conferring on it an open structure. The RuvB hexamer acts as an ATP-dependent pump, pulling dsDNA into and through the RuvAB complex. HJ branch migration allows RuvC to scan DNA until it finds its consensus sequence, where it cleaves and resolves the cruciform DNA. This is Holliday junction branch migration complex subunit RuvA from Magnetococcus marinus (strain ATCC BAA-1437 / JCM 17883 / MC-1).